The following is a 416-amino-acid chain: Serine/threonine transporter SstT (416 aa).

9 helical membrane passes run 15-35, 49-69, 82-102, 141-161, 192-212, 217-237, 288-308, 330-350, and 356-376; these read SLVS…MFMP, VGAL…AAII, ILLL…VASF, ALMD…GIAM, LGIL…ALFG, LVVL…IIVF, VSIP…ITVL, VVAT…LLLI, and LFGI…IIGV.

This sequence belongs to the dicarboxylate/amino acid:cation symporter (DAACS) (TC 2.A.23) family.

It localises to the cell inner membrane. It carries out the reaction L-serine(in) + Na(+)(in) = L-serine(out) + Na(+)(out). The enzyme catalyses L-threonine(in) + Na(+)(in) = L-threonine(out) + Na(+)(out). Functionally, involved in the import of serine and threonine into the cell, with the concomitant import of sodium (symport system). The chain is Serine/threonine transporter SstT from Aeromonas salmonicida (strain A449).